The primary structure comprises 77 residues: MPKCPKCSKEVYFAERVTSLGKDWHRPCLKCEKCGKTLTSGGHAEHEGKPYCNHPCYAAMFGPKGFGRGGAESHTFK.

In terms of domain architecture, LIM zinc-binding spans 2–63; the sequence is PKCPKCSKEV…HPCYAAMFGP (62 aa). Lys-9 and Lys-22 each carry N6-acetyllysine. Arg-68 is modified (omega-N-methylarginine).

Its function is as follows. Seems to have a role in zinc absorption and may function as an intracellular zinc transport protein. The protein is Cysteine-rich protein 1 (CRIP1) of Bos taurus (Bovine).